A 1804-amino-acid polypeptide reads, in one-letter code: Obscurin-like protein 1 (1804 aa).

Phosphoserine is present on S10. Ig-like domains lie at 12–100 (PCFL…AAVT), 128–225 (PKFL…ALLQ), 241–330 (PKPV…QTLS), and 339–425 (PRLR…ANVT). An interaction with TTN region spans residues 17-19 (FPR). A disulfide bond links C33 and C84. An interaction with TTN region spans residues 85–94 (RARNAAGEAY). A disulfide bridge links C149 with C209. The disordered stretch occupies residues 227–249 (HQPRESPPQDPDENPKPVLEPLK). Cystine bridges form between C267-C319 and C362-C412. In terms of domain architecture, Fibronectin type-III spans 517–615 (PPGPPVMVEM…FNGSAHLVPT (99 aa)). Ig-like domains lie at 720 to 800 (PQDK…FGVT), 804 to 891 (PPVH…FTVT), 902 to 982 (PSSE…FTIT), 986 to 1075 (PPVR…VTVT), 1078 to 1165 (PERI…FNVS), 1176 to 1261 (PEAA…FNVQ), 1266 to 1442 (PPVK…ARLS), 1536 to 1621 (PVTI…ARLT), 1625 to 1694 (REVS…EDTG), and 1702 to 1798 (PAQS…ADTQ). 8 disulfides stabilise this stretch: C738-C788, C829-C879, C920-C970, C1011-C1061, C1103-C1153, C1195-C1245, C1289-C1430, and C1558-C1608.

Component of the 3M complex, composed of core components CUL7, CCDC8 and OBSL1. Interacts with CCDC8. Interacts with CUL7; the interaction is direct. Interacts with FBXW8. Interacts (via N-terminal Ig-like domain) with TTN/titin (via C-terminal Ig-like domain); the interaction is direct.

The protein localises to the cytoplasm. The protein resides in the perinuclear region. Its subcellular location is the golgi apparatus. In terms of biological role, core component of the 3M complex, a complex required to regulate microtubule dynamics and genome integrity. It is unclear how the 3M complex regulates microtubules, it could act by controlling the level of a microtubule stabilizer. Acts as a regulator of the Cul7-RING(FBXW8) ubiquitin-protein ligase, playing a critical role in the ubiquitin ligase pathway that regulates Golgi morphogenesis and dendrite patterning in brain. Required to localize CUL7 to the Golgi apparatus in neurons. The polypeptide is Obscurin-like protein 1 (Obsl1) (Mus musculus (Mouse)).